A 279-amino-acid polypeptide reads, in one-letter code: MSWFNRVKPSISSTAKRDVPEGLWWKCEECGAALHKKQMEASDHTCPQCGYHFRISPYKYFSLLFDNQKYVEFDDHLRAADPLHFVDTKKYPDRVSDTIEKSGKTEACRNAHGLCGGETLVISAMDFSFIGGSMGSVVGEKISRAVDKAIELQSPLLVISQSGGARMMEGAFSLMQMAKTAAKLSLLSEHRLPYISLMTDPTMGGITASFAMLGDINISEPKALIGFAGPRVIRDTIKRDLPEGFQRAEFLLEHGFIDRIIPRRELKSDLTTLLSLMKL.

The CoA carboxyltransferase N-terminal domain maps to 23 to 279 (LWWKCEECGA…LTTLLSLMKL (257 aa)). Positions 27, 30, 46, and 49 each coordinate Zn(2+). The C4-type zinc-finger motif lies at 27–49 (CEECGAALHKKQMEASDHTCPQC).

It belongs to the AccD/PCCB family. As to quaternary structure, acetyl-CoA carboxylase is a heterohexamer composed of biotin carboxyl carrier protein (AccB), biotin carboxylase (AccC) and two subunits each of ACCase subunit alpha (AccA) and ACCase subunit beta (AccD). Zn(2+) serves as cofactor.

Its subcellular location is the cytoplasm. The catalysed reaction is N(6)-carboxybiotinyl-L-lysyl-[protein] + acetyl-CoA = N(6)-biotinyl-L-lysyl-[protein] + malonyl-CoA. The protein operates within lipid metabolism; malonyl-CoA biosynthesis; malonyl-CoA from acetyl-CoA: step 1/1. Its function is as follows. Component of the acetyl coenzyme A carboxylase (ACC) complex. Biotin carboxylase (BC) catalyzes the carboxylation of biotin on its carrier protein (BCCP) and then the CO(2) group is transferred by the transcarboxylase to acetyl-CoA to form malonyl-CoA. This is Acetyl-coenzyme A carboxylase carboxyl transferase subunit beta from Chlorobium chlorochromatii (strain CaD3).